Consider the following 491-residue polypeptide: Monocarboxylate transport permease protein (491 aa).

Transmembrane regions (helical) follow at residues 7–27 (GTAL…GFVA), 55–75 (WFLV…PALV), 83–103 (FFAL…MPVL), 130–150 (LAVA…QLVG), 157–177 (ALGL…ALYT), 187–207 (LIAF…VALI), 246–266 (LALG…GIFA), 277–297 (AIML…GYMG), 322–342 (WFSG…AAVM), 374–396 (ITSL…QFAL), 400–422 (LLGG…TNWF), 427–447 (LLAG…DAGW), and 465–485 (GLLA…LLPA).

Belongs to the sodium:solute symporter (SSF) (TC 2.A.21) family.

The protein localises to the cell membrane. With respect to regulation, inhibited by CCCP, but is apparently not affected by the concentration of sodium. In terms of biological role, low-affinity transporter of alanine and high-affinity transporter of lactate and pyruvate. Can also transport other monocarboxylates such as propionate, butyrate, alpha-hydroxybutyrate or acetate. May be proton coupled. Required for optimal growth on alanine or pyruvate and ammonia. This chain is Monocarboxylate transport permease protein, found in Rhizobium johnstonii (strain DSM 114642 / LMG 32736 / 3841) (Rhizobium leguminosarum bv. viciae).